We begin with the raw amino-acid sequence, 553 residues long: Dihydroxy-acid dehydratase (553 aa).

Asp-78 provides a ligand contact to Mg(2+). Cys-119 provides a ligand contact to [2Fe-2S] cluster. Mg(2+) contacts are provided by Asp-120 and Lys-121. Position 121 is an N6-carboxylysine (Lys-121). Residue Cys-193 participates in [2Fe-2S] cluster binding. Position 441 (Glu-441) interacts with Mg(2+). The active-site Proton acceptor is the Ser-467.

This sequence belongs to the IlvD/Edd family. Homodimer. It depends on [2Fe-2S] cluster as a cofactor. Mg(2+) serves as cofactor.

The catalysed reaction is (2R)-2,3-dihydroxy-3-methylbutanoate = 3-methyl-2-oxobutanoate + H2O. The enzyme catalyses (2R,3R)-2,3-dihydroxy-3-methylpentanoate = (S)-3-methyl-2-oxopentanoate + H2O. Its pathway is amino-acid biosynthesis; L-isoleucine biosynthesis; L-isoleucine from 2-oxobutanoate: step 3/4. It functions in the pathway amino-acid biosynthesis; L-valine biosynthesis; L-valine from pyruvate: step 3/4. Functionally, functions in the biosynthesis of branched-chain amino acids. Catalyzes the dehydration of (2R,3R)-2,3-dihydroxy-3-methylpentanoate (2,3-dihydroxy-3-methylvalerate) into 2-oxo-3-methylpentanoate (2-oxo-3-methylvalerate) and of (2R)-2,3-dihydroxy-3-methylbutanoate (2,3-dihydroxyisovalerate) into 2-oxo-3-methylbutanoate (2-oxoisovalerate), the penultimate precursor to L-isoleucine and L-valine, respectively. The sequence is that of Dihydroxy-acid dehydratase from Citrifermentans bemidjiense (strain ATCC BAA-1014 / DSM 16622 / JCM 12645 / Bem) (Geobacter bemidjiensis).